Consider the following 360-residue polypeptide: 3-dehydroquinate synthase (360 aa).

Residues 70 to 75 (DGEKYK), 104 to 108 (GVIGD), 128 to 129 (TT), lysine 141, and lysine 150 each bind NAD(+). Glutamate 183, histidine 246, and histidine 263 together coordinate Zn(2+).

Belongs to the sugar phosphate cyclases superfamily. Dehydroquinate synthase family. Co(2+) serves as cofactor. Zn(2+) is required as a cofactor. The cofactor is NAD(+).

Its subcellular location is the cytoplasm. It catalyses the reaction 7-phospho-2-dehydro-3-deoxy-D-arabino-heptonate = 3-dehydroquinate + phosphate. Its pathway is metabolic intermediate biosynthesis; chorismate biosynthesis; chorismate from D-erythrose 4-phosphate and phosphoenolpyruvate: step 2/7. Its function is as follows. Catalyzes the conversion of 3-deoxy-D-arabino-heptulosonate 7-phosphate (DAHP) to dehydroquinate (DHQ). This Acinetobacter baumannii (strain AYE) protein is 3-dehydroquinate synthase.